A 274-amino-acid polypeptide reads, in one-letter code: Formamidopyrimidine-DNA glycosylase (274 aa).

Pro2 functions as the Schiff-base intermediate with DNA in the catalytic mechanism. The active-site Proton donor is the Glu3. Catalysis depends on Lys57, which acts as the Proton donor; for beta-elimination activity. Residues His90, Arg109, and Lys150 each coordinate DNA. The FPG-type zinc finger occupies 235–269 (FVYGRKDKACLICGHTIESIKQGQRSTFFCRHCQH). Arg259 acts as the Proton donor; for delta-elimination activity in catalysis.

It belongs to the FPG family. Monomer. The cofactor is Zn(2+).

The enzyme catalyses Hydrolysis of DNA containing ring-opened 7-methylguanine residues, releasing 2,6-diamino-4-hydroxy-5-(N-methyl)formamidopyrimidine.. The catalysed reaction is 2'-deoxyribonucleotide-(2'-deoxyribose 5'-phosphate)-2'-deoxyribonucleotide-DNA = a 3'-end 2'-deoxyribonucleotide-(2,3-dehydro-2,3-deoxyribose 5'-phosphate)-DNA + a 5'-end 5'-phospho-2'-deoxyribonucleoside-DNA + H(+). Its function is as follows. Involved in base excision repair of DNA damaged by oxidation or by mutagenic agents. Acts as a DNA glycosylase that recognizes and removes damaged bases. Has a preference for oxidized purines, such as 7,8-dihydro-8-oxoguanine (8-oxoG). Has AP (apurinic/apyrimidinic) lyase activity and introduces nicks in the DNA strand. Cleaves the DNA backbone by beta-delta elimination to generate a single-strand break at the site of the removed base with both 3'- and 5'-phosphates. In Proteus mirabilis (strain HI4320), this protein is Formamidopyrimidine-DNA glycosylase.